The following is a 268-amino-acid chain: Phosphatidylglycerol--prolipoprotein diacylglyceryl transferase (268 aa).

The next 7 membrane-spanning stretches (helical) occupy residues 21–41 (WYGI…GRFA), 54–74 (FAII…VFVL), 93–113 (GLAI…YLPM), 122–142 (ADVV…GNFF), 173–193 (VMHP…GILL), 203–223 (GVVF…IESI), and 236–256 (VAQL…AWFL). A 1,2-diacyl-sn-glycero-3-phospho-(1'-sn-glycerol) is bound at residue Arg-137.

It belongs to the Lgt family.

It is found in the cell membrane. It catalyses the reaction L-cysteinyl-[prolipoprotein] + a 1,2-diacyl-sn-glycero-3-phospho-(1'-sn-glycerol) = an S-1,2-diacyl-sn-glyceryl-L-cysteinyl-[prolipoprotein] + sn-glycerol 1-phosphate + H(+). Its pathway is protein modification; lipoprotein biosynthesis (diacylglyceryl transfer). Functionally, catalyzes the transfer of the diacylglyceryl group from phosphatidylglycerol to the sulfhydryl group of the N-terminal cysteine of a prolipoprotein, the first step in the formation of mature lipoproteins. In Symbiobacterium thermophilum (strain DSM 24528 / JCM 14929 / IAM 14863 / T), this protein is Phosphatidylglycerol--prolipoprotein diacylglyceryl transferase.